A 512-amino-acid polypeptide reads, in one-letter code: MARAVHRSGLVALGIVTALMASCAFAAKDVVVAVGSNFTTLDPYDANDTLSQAVAKSFYQGLFGLDKEMKLKNVLAESYTVSDDGITYTVKLREGIKFQDGTDFNAAAVKANLDRASDPANHLKRYNLYKNIAKTEAIDPTTVKITLKQPFSAFINILAHPATAMISPAALEKYGKEIGFHPVGTGPYELDTWNQTDFVKVKKFAGYWQPGLPKLDSITWRPVADNNTRAAMLQTGEAQFAFPIPYEQAALLEKNKNIELMASPSIMQRYISMNVTQKPFDNPKVREALNYAINRPALVKVAFAGYATPATGVVPPSIAYAQSYKPWPYDPVKARELLKEAGYPNGFSTTLWSSHNHSTAQKVLQFTQQQLAQVGIKAQVTAMDAGQRAAEVEGKGQKESGVRMFYTGWSASTGEADWALSPLFASQNWPPTLFNTAFYSNKQVDDFLAQALKTNDPAEKTSLYKAAQDIIWQESPWIPLVVEKLVSAHSKNLTGFWIMPDTGFSFEDADLQ.

Positions Met-1–Ala-26 are cleaved as a signal peptide.

This sequence belongs to the bacterial solute-binding protein 5 family. The complex is composed of two ATP-binding proteins (GsiA), two transmembrane proteins (GsiC and GsiD) and a solute-binding protein (GsiB).

The protein resides in the periplasm. Functionally, part of the ABC transporter complex GsiABCD involved in glutathione import. Binds glutathione. This chain is Glutathione-binding protein GsiB, found in Shigella dysenteriae serotype 1 (strain Sd197).